The chain runs to 1088 residues: RNA-directed RNA polymerase (1088 aa).

Residues 501–687 enclose the RdRp catalytic domain; that stretch reads LSYGDVTRFL…AKRYIAGGKI (187 aa).

Belongs to the reoviridae RNA-directed RNA polymerase family. Interacts with VP3 (Potential). Interacts with VP2; this interaction activates VP1. Interacts with NSP5; this interaction is probably necessary for the formation of functional virus factories. Interacts with NSP2; this interaction is weak. Requires Mg(2+) as cofactor.

It is found in the virion. The enzyme catalyses RNA(n) + a ribonucleoside 5'-triphosphate = RNA(n+1) + diphosphate. In terms of biological role, RNA-directed RNA polymerase that is involved in both transcription and genome replication. Together with VP3 capping enzyme, forms an enzyme complex positioned near the channels situated at each of the five-fold vertices of the core. Following infection, the outermost layer of the virus is lost, leaving a double-layered particle (DLP) made up of the core and VP6 shell. VP1 then catalyzes the transcription of fully conservative plus-strand genomic RNAs that are extruded through the DLP's channels into the cytoplasm where they function as mRNAs for translation of viral proteins. One copy of each of the viral (+)RNAs is also recruited during core assembly, together with newly synthesized polymerase complexes and VP2. The polymerase of these novo-formed particles catalyzes the synthesis of complementary minus-strands leading to dsRNA formation. To do so, the polymerase specifically recognizes and binds 4 bases 5'-UGUG-3' in the conserved 3'-sequence of plus-strand RNA templates. VP2 presumably activates the autoinhibited VP1-RNA complex to coordinate packaging and genome replication. Once dsRNA synthesis is complete, the polymerase switches to the transcriptional mode, thus providing secondary transcription. In Rotavirus A (strain RVA/Human/Philippines/L26/1987/G12P1B[4]) (RV-A), this protein is RNA-directed RNA polymerase.